The primary structure comprises 52 residues: Lysis protein for colicin N (52 aa).

A signal peptide spans 1 to 17 (MCGKILLILFFIMTLSA). Cysteine 18 carries N-palmitoyl cysteine lipidation. Cysteine 18 carries S-diacylglycerol cysteine lipidation.

The protein localises to the cell outer membrane. Functionally, lysis proteins are required for both colicin release and partial cell lysis. In Escherichia coli, this protein is Lysis protein for colicin N (cnl).